Consider the following 349-residue polypeptide: 3-dehydroquinate synthase (349 aa).

Residues 63-68 (DGEEYK), 97-101 (GVIGD), 121-122 (TT), lysine 134, lysine 143, and 161-164 (FLTT) contribute to the NAD(+) site. Residues glutamate 176, histidine 235, and histidine 252 each coordinate Zn(2+).

It belongs to the sugar phosphate cyclases superfamily. Dehydroquinate synthase family. The cofactor is Co(2+). Zn(2+) serves as cofactor. NAD(+) is required as a cofactor.

The protein resides in the cytoplasm. The catalysed reaction is 7-phospho-2-dehydro-3-deoxy-D-arabino-heptonate = 3-dehydroquinate + phosphate. The protein operates within metabolic intermediate biosynthesis; chorismate biosynthesis; chorismate from D-erythrose 4-phosphate and phosphoenolpyruvate: step 2/7. Functionally, catalyzes the conversion of 3-deoxy-D-arabino-heptulosonate 7-phosphate (DAHP) to dehydroquinate (DHQ). This chain is 3-dehydroquinate synthase, found in Sulfurimonas denitrificans (strain ATCC 33889 / DSM 1251) (Thiomicrospira denitrificans (strain ATCC 33889 / DSM 1251)).